Reading from the N-terminus, the 174-residue chain is Guided entry of tail-anchored proteins factor 1 (174 aa).

Topologically, residues 1–8 (MSSAAADH) are lumenal. The chain crosses the membrane as a helical span at residues 9–29 (WAWLLVLSFVFGCNVLRVLLP). The Cytoplasmic portion of the chain corresponds to 30–99 (SFSSFMSRVL…VKARTAQLAK (70 aa)). The stretch at 39-94 (LQKDAEQESQMRAEIQDMKQELSTVNMMDEFARYARLERKINKMTDKLKTHVKART) forms a coiled coil. The segment at 39 to 97 (LQKDAEQESQMRAEIQDMKQELSTVNMMDEFARYARLERKINKMTDKLKTHVKARTAQL) is interaction with GET3/TRC40. The helical transmembrane segment at 100-120 (IKWVISVAFYVLQAALMISLI) threads the bilayer. The Lumenal portion of the chain corresponds to 121-148 (WKYYSVPVAVVPSKWITPLDRLVAFPTR). Residues 149–169 (VAGGVGITCWILVCNKVVAIV) traverse the membrane as a helical segment. Residues 170–174 (LHPFS) lie on the Cytoplasmic side of the membrane.

This sequence belongs to the WRB/GET1 family. Component of the Golgi to ER traffic (GET) complex, which is composed of GET1/WRB, CAMLG/GET2 and GET3. Within the complex, GET1 and CAMLG form a heterotetramer which is stabilized by phosphatidylinositol binding and which binds to the GET3 homodimer. Interacts with CAMLG (via C-terminus). GET3 shows a higher affinity for CAMLG than for GET1.

It localises to the endoplasmic reticulum membrane. Functionally, required for the post-translational delivery of tail-anchored (TA) proteins to the endoplasmic reticulum. Together with CAMLG/GET2, acts as a membrane receptor for soluble GET3/TRC40, which recognizes and selectively binds the transmembrane domain of TA proteins in the cytosol. Required to ensure correct topology and ER insertion of CAMLG. This chain is Guided entry of tail-anchored proteins factor 1, found in Pongo abelii (Sumatran orangutan).